A 750-amino-acid chain; its full sequence is K(+)-insensitive pyrophosphate-energized proton pump (750 aa).

5 helical membrane-spanning segments follow: residues 1–21 (MYGL…YQGI), 51–71 (FIII…GGLN), 78–98 (VVFI…VAWF), 133–153 (IGML…LFIP), and 161–181 (FIGF…AGGI). Residue Lys184 participates in substrate binding. Mg(2+)-binding residues include Asp187, Asp191, and Asp216. Helical transmembrane passes span 227-247 (DGFE…LLAI), 257-277 (LVWI…SYWV), 301-321 (LVWL…YMLI), 327-347 (GTMW…GALI), 391-411 (WMGL…TLGL), and 420-440 (VFAF…TIAV). Asp448 contributes to the Mg(2+) binding site. 4 helical membrane passes run 503-523 (VLIG…IMIL), 538-558 (ILWP…YWFT), 607-627 (GMIN…CLES), and 629-649 (LFIG…IFMA). Ca(2+) contacts are provided by Asp656, Asp681, and Asp685. Lys688 serves as a coordination point for substrate. Transmembrane regions (helical) follow at residues 694–714 (ALNP…ELAI) and 716–736 (LPTT…LVFV).

This sequence belongs to the H(+)-translocating pyrophosphatase (TC 3.A.10) family. K(+)-insensitive subfamily. Homodimer. The cofactor is Mg(2+).

It is found in the cell inner membrane. It carries out the reaction diphosphate + H2O + H(+)(in) = 2 phosphate + 2 H(+)(out). Proton pump that utilizes the energy of pyrophosphate hydrolysis as the driving force for proton movement across the membrane. Generates a proton motive force. This chain is K(+)-insensitive pyrophosphate-energized proton pump, found in Chlorobaculum tepidum (strain ATCC 49652 / DSM 12025 / NBRC 103806 / TLS) (Chlorobium tepidum).